The chain runs to 468 residues: Probable ubiquitin carboxyl-terminal hydrolase R319 (468 aa).

Residues 42–462 (TGIMNLGNTC…NAYILFYIRS (421 aa)) form the USP domain. The active-site Nucleophile is cysteine 51. The active-site Proton acceptor is histidine 420.

The protein belongs to the peptidase C19 family.

The enzyme catalyses Thiol-dependent hydrolysis of ester, thioester, amide, peptide and isopeptide bonds formed by the C-terminal Gly of ubiquitin (a 76-residue protein attached to proteins as an intracellular targeting signal).. This chain is Probable ubiquitin carboxyl-terminal hydrolase R319, found in Acanthamoeba polyphaga (Amoeba).